The sequence spans 270 residues: GTP cyclohydrolase FolE2 (270 aa).

Belongs to the GTP cyclohydrolase IV family.

It carries out the reaction GTP + H2O = 7,8-dihydroneopterin 3'-triphosphate + formate + H(+). It functions in the pathway cofactor biosynthesis; 7,8-dihydroneopterin triphosphate biosynthesis; 7,8-dihydroneopterin triphosphate from GTP: step 1/1. Converts GTP to 7,8-dihydroneopterin triphosphate. In Cupriavidus pinatubonensis (strain JMP 134 / LMG 1197) (Cupriavidus necator (strain JMP 134)), this protein is GTP cyclohydrolase FolE2.